A 737-amino-acid polypeptide reads, in one-letter code: Glycogen [starch] synthase, muscle (737 aa).

Position 8 is a phosphoserine; by AMPK and PKA (serine 8). Serine 11 carries the post-translational modification Phosphoserine. Lysine 39 lines the UDP pocket. Positions 205 and 211 each coordinate UDP-alpha-D-glucose. 5 residues coordinate alpha-D-glucose 6-phosphate: histidine 291, glutamate 292, glutamine 294, histidine 297, and lysine 301. Arginine 331 contacts UDP. UDP-alpha-D-glucose is bound at residue arginine 331. Serine 412 carries the phosphoserine modification. Histidine 501 contacts alpha-D-glucose 6-phosphate. Residues glutamate 510, tryptophan 512, and glycine 513 each contribute to the UDP-alpha-D-glucose site. Threonine 515 serves as a coordination point for UDP. Arginine 582 and arginine 586 together coordinate alpha-D-glucose 6-phosphate. Residues 634 to 737 (YRYPRPASVP…PTSSLGEERN (104 aa)) form a disordered region. The residue at position 641 (serine 641) is a Phosphoserine; by DYRK2, GSK3-alpha, GSK3-beta and PASK. 2 positions are modified to phosphoserine; by GSK3-alpha and GSK3-beta: serine 645 and serine 649. Phosphoserine is present on serine 652. Phosphoserine; by GSK3-alpha and GSK3-beta is present on serine 653. Serine 657 is subject to Phosphoserine; by CK2. Acidic residues predominate over residues 658–681 (EDEEDPRNGPLEEDSERYDEDEEA). Serine 672 is subject to Phosphoserine. Basic and acidic residues predominate over residues 682–695 (AKDRRNIRAPEWPR). Serine 698 is modified (phosphoserine). The segment covering 698–714 (SCTSSTSGSKRNSVDTA) has biased composition (polar residues). A Phosphothreonine modification is found at threonine 700. Phosphoserine is present on serine 710. Positions 715–737 (TSSSLSTPSEPLSPTSSLGEERN) are enriched in low complexity. Residue threonine 721 is modified to Phosphothreonine. Phosphoserine is present on residues serine 727 and serine 731.

It belongs to the glycosyltransferase 3 family. Part of the GYS1-GYG1 complex, a heterooctamer composed of a tetramer of GYS1 and 2 dimers of GYG1, where each GYS1 protomer binds to one GYG1 subunit (via GYG1 C-terminus); the GYS1 tetramer may dissociate from GYG1 dimers to continue glycogen polymerization on its own. In terms of processing, phosphorylation at Ser-8 by AMPK inactivates the enzyme activity. Primed phosphorylation at Ser-657 (site 5) by CSNK2A1 and CSNK2A2 is required for inhibitory phosphorylation at Ser-641 (site 3a), Ser-645 (site 3b), Ser-649 (site 3c) and Ser-653 (site 4) by GSK3A an GSK3B. Phosphorylated at Ser-641 by PASK, leading to inactivation; phosphorylation by PASK is inhibited by glycogen. Phosphorylated at Ser-641 by DYRK2, leading to inactivation. Dephosphorylation at Ser-641 and Ser-645 by PP1 activates the enzyme.

The catalysed reaction is [(1-&gt;4)-alpha-D-glucosyl](n) + UDP-alpha-D-glucose = [(1-&gt;4)-alpha-D-glucosyl](n+1) + UDP + H(+). Its pathway is glycan biosynthesis; glycogen biosynthesis. Allosteric activation by glucose-6-phosphate. Phosphorylation reduces the activity towards UDP-glucose. When in the non-phosphorylated state, glycogen synthase does not require glucose-6-phosphate as an allosteric activator; when phosphorylated it does. Functionally, glycogen synthase participates in the glycogen biosynthetic process along with glycogenin and glycogen branching enzyme. Extends the primer composed of a few glucose units formed by glycogenin by adding new glucose units to it. In this context, glycogen synthase transfers the glycosyl residue from UDP-Glc to the non-reducing end of alpha-1,4-glucan. The chain is Glycogen [starch] synthase, muscle (GYS1) from Macaca mulatta (Rhesus macaque).